The sequence spans 273 residues: Methylthioribulose-1-phosphate dehydratase (273 aa).

Residues 1 to 27 (MCPTCPPSAASASSENNNTDNNDHLVL) form a disordered region. Substrate is bound at residue Cys114. Zn(2+) contacts are provided by His132 and His134. Glu168 acts as the Proton donor/acceptor in catalysis. Residue His225 coordinates Zn(2+).

It belongs to the aldolase class II family. MtnB subfamily. The cofactor is Zn(2+).

Its subcellular location is the cytoplasm. It catalyses the reaction 5-(methylsulfanyl)-D-ribulose 1-phosphate = 5-methylsulfanyl-2,3-dioxopentyl phosphate + H2O. It participates in amino-acid biosynthesis; L-methionine biosynthesis via salvage pathway; L-methionine from S-methyl-5-thio-alpha-D-ribose 1-phosphate: step 2/6. Catalyzes the dehydration of methylthioribulose-1-phosphate (MTRu-1-P) into 2,3-diketo-5-methylthiopentyl-1-phosphate (DK-MTP-1-P). This chain is Methylthioribulose-1-phosphate dehydratase, found in Sordaria macrospora (strain ATCC MYA-333 / DSM 997 / K(L3346) / K-hell).